The chain runs to 325 residues: Beta-ketoacyl-[acyl-carrier-protein] synthase III (325 aa).

Catalysis depends on residues C116 and H252. Positions 253 to 257 (QANLR) are ACP-binding. N282 is an active-site residue.

It belongs to the thiolase-like superfamily. FabH family. As to quaternary structure, homodimer.

It is found in the cytoplasm. It catalyses the reaction butanoyl-CoA + malonyl-[ACP] + H(+) = 3-oxohexanoyl-[ACP] + CO2 + CoA. The enzyme catalyses hexanoyl-CoA + malonyl-[ACP] + H(+) = 3-oxooctanoyl-[ACP] + CO2 + CoA. The catalysed reaction is octanoyl-CoA + malonyl-[ACP] + H(+) = 3-oxodecanoyl-[ACP] + CO2 + CoA. It carries out the reaction decanoyl-CoA + malonyl-[ACP] + H(+) = 3-oxododecanoyl-[ACP] + CO2 + CoA. It catalyses the reaction 2-methylpropanoyl-CoA + malonyl-[ACP] + H(+) = 4-methyl-3-oxopentanoyl-[ACP] + CO2 + CoA. The enzyme catalyses 3-methylbutanoyl-CoA + malonyl-[ACP] + H(+) = 5-methyl-3-oxohexanoyl-[ACP] + CO2 + CoA. The catalysed reaction is malonyl-[ACP] + acetyl-CoA + H(+) = 3-oxobutanoyl-[ACP] + CO2 + CoA. The protein operates within lipid metabolism; fatty acid biosynthesis. Catalyzes the condensation reaction of fatty acid synthesis by the addition to an acyl acceptor of two carbons from malonyl-ACP. Catalyzes the first condensation reaction which initiates fatty acid synthesis and may therefore play a role in governing the total rate of fatty acid production. Possesses both acetoacetyl-ACP synthase and acetyl transacylase activities. Can use a wide range of acyl-CoAs as the primer substrate in vitro, with a slight preference for short, medium-straight chain acyl-CoAs. Can also use branched-chain acyl-CoAs and acetyl-CoA. The polypeptide is Beta-ketoacyl-[acyl-carrier-protein] synthase III (Xanthomonas campestris pv. campestris (strain 8004)).